Reading from the N-terminus, the 428-residue chain is Serine--tRNA ligase (428 aa).

Position 231–233 (231–233 (TAE)) interacts with L-serine. 262–264 (RSE) contributes to the ATP binding site. Glutamate 285 provides a ligand contact to L-serine. An ATP-binding site is contributed by 349-352 (EISS). Serine 385 contributes to the L-serine binding site.

Belongs to the class-II aminoacyl-tRNA synthetase family. Type-1 seryl-tRNA synthetase subfamily. Homodimer. The tRNA molecule binds across the dimer.

The protein localises to the cytoplasm. The enzyme catalyses tRNA(Ser) + L-serine + ATP = L-seryl-tRNA(Ser) + AMP + diphosphate + H(+). It carries out the reaction tRNA(Sec) + L-serine + ATP = L-seryl-tRNA(Sec) + AMP + diphosphate + H(+). The protein operates within aminoacyl-tRNA biosynthesis; selenocysteinyl-tRNA(Sec) biosynthesis; L-seryl-tRNA(Sec) from L-serine and tRNA(Sec): step 1/1. Functionally, catalyzes the attachment of serine to tRNA(Ser). Is also able to aminoacylate tRNA(Sec) with serine, to form the misacylated tRNA L-seryl-tRNA(Sec), which will be further converted into selenocysteinyl-tRNA(Sec). The sequence is that of Serine--tRNA ligase from Staphylococcus aureus (strain MRSA252).